The following is a 106-amino-acid chain: Large ribosomal subunit protein uL24 (106 aa).

Belongs to the universal ribosomal protein uL24 family. Part of the 50S ribosomal subunit.

In terms of biological role, one of two assembly initiator proteins, it binds directly to the 5'-end of the 23S rRNA, where it nucleates assembly of the 50S subunit. Its function is as follows. One of the proteins that surrounds the polypeptide exit tunnel on the outside of the subunit. The sequence is that of Large ribosomal subunit protein uL24 from Acidiphilium cryptum (strain JF-5).